Reading from the N-terminus, the 192-residue chain is Glycerol-3-phosphate acyltransferase (192 aa).

5 consecutive transmembrane segments (helical) span residues 5 to 25 (VVLILSYILGSIPFSLIITRI), 50 to 70 (FLAALALFLDSFKGFIAVYIA), 78 to 98 (DFYIYVSAILAVLGHMFPIWL), 112 to 132 (ILIAFNIDITLVFVIIWIIVF), and 153 to 173 (SFFFQRNLFLTLLIIGALVFL).

The protein belongs to the PlsY family. Probably interacts with PlsX.

It localises to the cell membrane. The catalysed reaction is an acyl phosphate + sn-glycerol 3-phosphate = a 1-acyl-sn-glycero-3-phosphate + phosphate. The protein operates within lipid metabolism; phospholipid metabolism. Catalyzes the transfer of an acyl group from acyl-phosphate (acyl-PO(4)) to glycerol-3-phosphate (G3P) to form lysophosphatidic acid (LPA). This enzyme utilizes acyl-phosphate as fatty acyl donor, but not acyl-CoA or acyl-ACP. The chain is Glycerol-3-phosphate acyltransferase from Wolbachia pipientis wMel.